A 768-amino-acid chain; its full sequence is Degenerin mec-4 (768 aa).

At 1 to 109 (MSWMQNLKNY…GEAPNVYYRA (109 aa)) the chain is on the cytoplasmic side. The helical transmembrane segment at 110 to 130 (VWVMLFLGCMIMLYLNAQSVL) threads the bilayer. Residues 131–718 (DKYNRNEKIV…VNLLADFGGQ (588 aa)) are Extracellular-facing. Disordered stretches follow at residues 187–221 (AGGNKEHDGEKEVITEAPTTPAPTTKPSRRRGKRD) and 237–260 (GSQGSSEQEDKDDEKEEEMHETTT). Basic and acidic residues predominate over residues 189 to 200 (GNKEHDGEKEVI). Over residues 203–212 (APTTPAPTTK) the composition is skewed to low complexity. The span at 243 to 252 (EQEDKDDEKE) shows a compositional bias: acidic residues. N-linked (GlcNAc...) asparagine glycosylation is found at Asn336, Asn357, Asn480, Asn484, Asn503, and Asn671. The helical transmembrane segment at 719–739 (LGLWCGISFLTCCEFVFLFLE) threads the bilayer. Residues 740–768 (TAYMSAEHNYSLYKKKKAEKAKKVASGSF) are Cytoplasmic-facing.

This sequence belongs to the amiloride-sensitive sodium channel (TC 1.A.6) family. In terms of assembly, the channel is probably composed of at least the mec-2, mec-4, mec-6 and mec-10 subunits.

It is found in the membrane. Its function is as follows. Probable sodium channel subunit. May be needed for mechanosensory transduction (touch sensitivity). Negatively regulates the turning step of male mating behavior. This chain is Degenerin mec-4 (mec-4), found in Caenorhabditis briggsae.